The primary structure comprises 237 residues: Phosphoribosylaminoimidazole-succinocarboxamide synthase (237 aa).

Belongs to the SAICAR synthetase family.

The catalysed reaction is 5-amino-1-(5-phospho-D-ribosyl)imidazole-4-carboxylate + L-aspartate + ATP = (2S)-2-[5-amino-1-(5-phospho-beta-D-ribosyl)imidazole-4-carboxamido]succinate + ADP + phosphate + 2 H(+). It participates in purine metabolism; IMP biosynthesis via de novo pathway; 5-amino-1-(5-phospho-D-ribosyl)imidazole-4-carboxamide from 5-amino-1-(5-phospho-D-ribosyl)imidazole-4-carboxylate: step 1/2. The protein is Phosphoribosylaminoimidazole-succinocarboxamide synthase of Psychrobacter arcticus (strain DSM 17307 / VKM B-2377 / 273-4).